The following is an 88-amino-acid chain: Phosphoribosyl-ATP pyrophosphatase (88 aa).

It belongs to the PRA-PH family.

Its subcellular location is the cytoplasm. It catalyses the reaction 1-(5-phospho-beta-D-ribosyl)-ATP + H2O = 1-(5-phospho-beta-D-ribosyl)-5'-AMP + diphosphate + H(+). It functions in the pathway amino-acid biosynthesis; L-histidine biosynthesis; L-histidine from 5-phospho-alpha-D-ribose 1-diphosphate: step 2/9. The protein is Phosphoribosyl-ATP pyrophosphatase of Cutibacterium acnes (strain DSM 16379 / KPA171202) (Propionibacterium acnes).